A 279-amino-acid polypeptide reads, in one-letter code: Movement protein (279 aa).

The segment at Ser246–Leu279 is disordered. Residues Glu254–Ser268 show a composition bias toward low complexity.

Belongs to the cucumovirus movement protein family.

The protein localises to the host cell junction. It localises to the host plasmodesma. Transports viral genome to neighboring plant cells directly through plasmosdesmata, without any budding. The movement protein allows efficient cell to cell propagation, by bypassing the host cell wall barrier. Acts by forming a tubular structure at the host plasmodesmata, enlarging it enough to allow free passage of virion capsids. The protein is Movement protein of Cucumis sativus (Cucumber).